A 387-amino-acid chain; its full sequence is Chaperone protein DnaJ (387 aa).

A J domain is found at 5–70 (DYYEVLGVAK…QKRAAYDRFG (66 aa)). Residues 140–218 (GKTETIRLPT…CGGAGRVTRE (79 aa)) form a CR-type zinc finger. Residues cysteine 153, cysteine 156, cysteine 170, cysteine 173, cysteine 192, cysteine 195, cysteine 206, and cysteine 209 each contribute to the Zn(2+) site. CXXCXGXG motif repeat units lie at residues 153 to 160 (CEVCAGSG), 170 to 177 (CPTCGGYG), 192 to 199 (CPNCQGRG), and 206 to 213 (CAACGGAG).

It belongs to the DnaJ family. Homodimer. It depends on Zn(2+) as a cofactor.

It is found in the cytoplasm. In terms of biological role, participates actively in the response to hyperosmotic and heat shock by preventing the aggregation of stress-denatured proteins and by disaggregating proteins, also in an autonomous, DnaK-independent fashion. Unfolded proteins bind initially to DnaJ; upon interaction with the DnaJ-bound protein, DnaK hydrolyzes its bound ATP, resulting in the formation of a stable complex. GrpE releases ADP from DnaK; ATP binding to DnaK triggers the release of the substrate protein, thus completing the reaction cycle. Several rounds of ATP-dependent interactions between DnaJ, DnaK and GrpE are required for fully efficient folding. Also involved, together with DnaK and GrpE, in the DNA replication of plasmids through activation of initiation proteins. This Methylobacterium sp. (strain 4-46) protein is Chaperone protein DnaJ.